The primary structure comprises 268 residues: Ribosomal RNA small subunit methyltransferase A (268 aa).

Positions 18, 20, 45, 66, 91, and 112 each coordinate S-adenosyl-L-methionine.

This sequence belongs to the class I-like SAM-binding methyltransferase superfamily. rRNA adenine N(6)-methyltransferase family. RsmA subfamily.

The protein resides in the cytoplasm. It catalyses the reaction adenosine(1518)/adenosine(1519) in 16S rRNA + 4 S-adenosyl-L-methionine = N(6)-dimethyladenosine(1518)/N(6)-dimethyladenosine(1519) in 16S rRNA + 4 S-adenosyl-L-homocysteine + 4 H(+). In terms of biological role, specifically dimethylates two adjacent adenosines (A1518 and A1519) in the loop of a conserved hairpin near the 3'-end of 16S rRNA in the 30S particle. May play a critical role in biogenesis of 30S subunits. This Shewanella frigidimarina (strain NCIMB 400) protein is Ribosomal RNA small subunit methyltransferase A.